Reading from the N-terminus, the 180-residue chain is CDP-archaeol synthase (180 aa).

Transmembrane regions (helical) follow at residues 5-25 (LVAT…AAVL), 54-74 (AVGT…AEPA), 78-98 (LGVD…FGAM), 118-138 (AFPG…VFVV), and 142-162 (WALA…TPIL).

This sequence belongs to the CDP-archaeol synthase family. The cofactor is Mg(2+).

The protein localises to the cell membrane. It catalyses the reaction 2,3-bis-O-(geranylgeranyl)-sn-glycerol 1-phosphate + CTP + H(+) = CDP-2,3-bis-O-(geranylgeranyl)-sn-glycerol + diphosphate. Its pathway is membrane lipid metabolism; glycerophospholipid metabolism. Catalyzes the formation of CDP-2,3-bis-(O-geranylgeranyl)-sn-glycerol (CDP-archaeol) from 2,3-bis-(O-geranylgeranyl)-sn-glycerol 1-phosphate (DGGGP) and CTP. This reaction is the third ether-bond-formation step in the biosynthesis of archaeal membrane lipids. In Halorubrum lacusprofundi (strain ATCC 49239 / DSM 5036 / JCM 8891 / ACAM 34), this protein is CDP-archaeol synthase.